A 243-amino-acid chain; its full sequence is Ubiquinone/menaquinone biosynthesis C-methyltransferase UbiE (243 aa).

S-adenosyl-L-methionine-binding positions include Thr-69, Asp-90, and 116–117; that span reads DA.

This sequence belongs to the class I-like SAM-binding methyltransferase superfamily. MenG/UbiE family.

The catalysed reaction is a 2-demethylmenaquinol + S-adenosyl-L-methionine = a menaquinol + S-adenosyl-L-homocysteine + H(+). It catalyses the reaction a 2-methoxy-6-(all-trans-polyprenyl)benzene-1,4-diol + S-adenosyl-L-methionine = a 5-methoxy-2-methyl-3-(all-trans-polyprenyl)benzene-1,4-diol + S-adenosyl-L-homocysteine + H(+). Its pathway is quinol/quinone metabolism; menaquinone biosynthesis; menaquinol from 1,4-dihydroxy-2-naphthoate: step 2/2. It functions in the pathway cofactor biosynthesis; ubiquinone biosynthesis. Its function is as follows. Methyltransferase required for the conversion of demethylmenaquinol (DMKH2) to menaquinol (MKH2) and the conversion of 2-polyprenyl-6-methoxy-1,4-benzoquinol (DDMQH2) to 2-polyprenyl-3-methyl-6-methoxy-1,4-benzoquinol (DMQH2). This chain is Ubiquinone/menaquinone biosynthesis C-methyltransferase UbiE, found in Cupriavidus metallidurans (strain ATCC 43123 / DSM 2839 / NBRC 102507 / CH34) (Ralstonia metallidurans).